Consider the following 291-residue polypeptide: Protease HtpX homolog (291 aa).

A run of 2 helical transmembrane segments spans residues 4-24 (IALF…TASL) and 38-58 (LGAL…ISLL). Histidine 144 lines the Zn(2+) pocket. Glutamate 145 is an active-site residue. A Zn(2+)-binding site is contributed by histidine 148. The next 2 membrane-spanning stretches (helical) occupy residues 159–179 (LIQG…GYFI) and 197–217 (VTTV…VAWF). Glutamate 222 is a binding site for Zn(2+).

This sequence belongs to the peptidase M48B family. The cofactor is Zn(2+).

The protein localises to the cell inner membrane. The protein is Protease HtpX homolog of Leptothrix cholodnii (strain ATCC 51168 / LMG 8142 / SP-6) (Leptothrix discophora (strain SP-6)).